The following is a 349-amino-acid chain: tRNA-specific 2-thiouridylase MnmA (349 aa).

Residues 7–14 (GLSGGVDS) and L33 each bind ATP. The active-site Nucleophile is the C94. A disulfide bond links C94 and C193. Residue G119 coordinates ATP. An interaction with tRNA region spans residues 143 to 145 (KDQ). C193 (cysteine persulfide intermediate) is an active-site residue. Positions 298-299 (RY) are interaction with tRNA.

The protein belongs to the MnmA/TRMU family.

The protein resides in the cytoplasm. It carries out the reaction S-sulfanyl-L-cysteinyl-[protein] + uridine(34) in tRNA + AH2 + ATP = 2-thiouridine(34) in tRNA + L-cysteinyl-[protein] + A + AMP + diphosphate + H(+). Its function is as follows. Catalyzes the 2-thiolation of uridine at the wobble position (U34) of tRNA, leading to the formation of s(2)U34. In Rippkaea orientalis (strain PCC 8801 / RF-1) (Cyanothece sp. (strain PCC 8801)), this protein is tRNA-specific 2-thiouridylase MnmA.